Reading from the N-terminus, the 224-residue chain is N6-methyladenosine RNA demethylase ALKBH (224 aa).

The 130-residue stretch at 93-222 (LAQAAIVNFY…RINLNVRQMR (130 aa)) folds into the Fe2OG dioxygenase domain. Fe cation is bound by residues H111, D113, and H178. R213 serves as a coordination point for 2-oxoglutarate.

This sequence belongs to the alkB family. Fe(2+) serves as cofactor.

It carries out the reaction an N(6)-methyladenosine in mRNA + 2-oxoglutarate + O2 = an adenosine in mRNA + formaldehyde + succinate + CO2. RNA demethylase that regulates the stability of mRNAs through an m(6)A-dependent manner. M6A is a modification present at internal sites of mRNAs and some non-coding RNAs and plays a role in mRNA stability and processing. Demethylate m6A at position A1935 within the 3'UTR of transcription factor ZAP1 and plays an important role in C.parasitica development and virulence. Target mRNAs are primarily associated with amino-acid biosynthesis, 2-oxocarboxylic acid metabolism, and ABC transporters, as well as alpha-amino acid metabolism, small-molecule biosynthesis, and the sulfite reductase complex (NADPH). The sequence is that of N6-methyladenosine RNA demethylase ALKBH from Cryphonectria parasitica (strain ATCC 38755 / EP155).